The sequence spans 416 residues: UDP-N-acetylglucosamine 1-carboxyvinyltransferase (416 aa).

22–23 (KN) lines the phosphoenolpyruvate pocket. Residue arginine 92 coordinates UDP-N-acetyl-alpha-D-glucosamine. Cysteine 116 functions as the Proton donor in the catalytic mechanism. Cysteine 116 carries the 2-(S-cysteinyl)pyruvic acid O-phosphothioketal modification. Residues 121–125 (RPVDQ), aspartate 304, and isoleucine 326 each bind UDP-N-acetyl-alpha-D-glucosamine.

It belongs to the EPSP synthase family. MurA subfamily.

Its subcellular location is the cytoplasm. The enzyme catalyses phosphoenolpyruvate + UDP-N-acetyl-alpha-D-glucosamine = UDP-N-acetyl-3-O-(1-carboxyvinyl)-alpha-D-glucosamine + phosphate. It functions in the pathway cell wall biogenesis; peptidoglycan biosynthesis. In terms of biological role, cell wall formation. Adds enolpyruvyl to UDP-N-acetylglucosamine. The protein is UDP-N-acetylglucosamine 1-carboxyvinyltransferase of Cupriavidus necator (strain ATCC 17699 / DSM 428 / KCTC 22496 / NCIMB 10442 / H16 / Stanier 337) (Ralstonia eutropha).